The primary structure comprises 237 residues: NAD-dependent protein deacetylase (237 aa).

In terms of domain architecture, Deacetylase sirtuin-type spans 1-237 (MQDITQAEAI…TIFAELTIKE (237 aa)). 7 residues coordinate NAD(+): Ala-25, Thr-29, Arg-37, Gln-100, Ile-102, Asp-103, and His-118. Ile-102 and Asp-103 together coordinate nicotinamide. The active-site Proton acceptor is His-118. Residues Cys-126, Cys-129, His-144, and Cys-147 each coordinate Zn(2+). Residues Thr-185, Ser-186, and Asn-209 each coordinate NAD(+).

This sequence belongs to the sirtuin family. Class U subfamily.

It is found in the cytoplasm. It catalyses the reaction N(6)-acetyl-L-lysyl-[protein] + NAD(+) + H2O = 2''-O-acetyl-ADP-D-ribose + nicotinamide + L-lysyl-[protein]. In terms of biological role, NAD-dependent protein deacetylase which modulates the activities of several enzymes which are inactive in their acetylated form. The protein is NAD-dependent protein deacetylase of Enterococcus faecalis (strain ATCC 700802 / V583).